The sequence spans 865 residues: Alanine--tRNA ligase (865 aa).

Zn(2+)-binding residues include His-554, His-558, Cys-656, and His-660.

It belongs to the class-II aminoacyl-tRNA synthetase family. Requires Zn(2+) as cofactor.

It localises to the cytoplasm. It carries out the reaction tRNA(Ala) + L-alanine + ATP = L-alanyl-tRNA(Ala) + AMP + diphosphate. Its function is as follows. Catalyzes the attachment of alanine to tRNA(Ala) in a two-step reaction: alanine is first activated by ATP to form Ala-AMP and then transferred to the acceptor end of tRNA(Ala). Also edits incorrectly charged Ser-tRNA(Ala) and Gly-tRNA(Ala) via its editing domain. The chain is Alanine--tRNA ligase from Idiomarina loihiensis (strain ATCC BAA-735 / DSM 15497 / L2-TR).